Reading from the N-terminus, the 352-residue chain is Decapping nuclease din1 (352 aa).

Substrate contacts are provided by residues Arg-33 and 93-95; that span reads WRG. Glu-150 provides a ligand contact to a divalent metal cation. Substrate-binding residues include Cys-182 and Glu-199. Asp-201 is a binding site for a divalent metal cation. Ser-218 bears the Phosphoserine mark. A divalent metal cation is bound by residues Glu-239 and Leu-240. The substrate site is built by Lys-241 and Gln-263.

Belongs to the DXO/Dom3Z family. Interacts with dhp1/Rat1; the interaction is direct, stabilizes dhp1 protein structure and stimulates its exoribonuclease activity. The interaction also stimulates din1 pyrophosphohydrolase activity, probably by recruiting it to mRNA substrates. It depends on a divalent metal cation as a cofactor.

The protein localises to the nucleus. It carries out the reaction a 5'-end NAD(+)-phospho-ribonucleoside in mRNA + H2O = a 5'-end phospho-ribonucleoside in mRNA + NAD(+) + H(+). The catalysed reaction is a 5'-end (N(7)-methyl 5'-triphosphoguanosine)-ribonucleoside-ribonucleotide in mRNA + H2O = a (N(7)-methyl 5'-triphosphoguanosine)-nucleoside + a 5'-end phospho-ribonucleoside in mRNA + H(+). The enzyme catalyses a 5'-end triphospho-ribonucleoside in mRNA + H2O = a 5'-end phospho-ribonucleoside in mRNA + diphosphate + H(+). Functionally, decapping enzyme for NAD-capped RNAs: specifically hydrolyzes the nicotinamide adenine dinucleotide (NAD) cap from a subset of RNAs by removing the entire NAD moiety from the 5'-end of an NAD-capped RNA. The NAD-cap is present at the 5'-end of some RNAs and snoRNAs. In contrast to the canonical 5'-end N7 methylguanosine (m7G) cap, the NAD cap promotes mRNA decay. Also acts as a non-canonical decapping enzyme that removes the entire cap structure of m7G capped or incompletely capped RNAs and mediates their subsequent degradation. Specifically degrades pre-mRNAs with a defective m7G cap and is part of a pre-mRNA capping quality control. Has decapping activity toward incomplete 5'-end m7G cap mRNAs such as unmethylated 5'-end-capped RNA (cap0), while it has no activity toward 2'-O-ribose methylated m7G cap (cap1). Also possesses RNA 5'-pyrophosphohydrolase activity by hydrolyzing the 5'-end triphosphate to release pyrophosphates. Stimulates exoribonuclease activity of dhp1, allowing it to degrade RNAs with stable secondary structure more effectively. The chain is Decapping nuclease din1 from Schizosaccharomyces pombe (strain 972 / ATCC 24843) (Fission yeast).